We begin with the raw amino-acid sequence, 471 residues long: Secretogranin-3 (471 aa).

An N-terminal signal peptide occupies residues 1 to 22; that stretch reads MGFLWTGSWILVLVLNSGPIQA. Disordered regions lie at residues 24-45, 89-108, and 345-404; these read PKPE…ERPL, TVEK…QLNV, and KLEK…TDEA. Positions 28–45 are enriched in basic and acidic residues; that stretch reads GSQDKSLHNRELSAERPL. Residue Ser40 is modified to Phosphoserine. An O-linked (Xyl...) (chondroitin sulfate) serine glycan is attached at Ser40. Composition is skewed to basic and acidic residues over residues 345-355 and 364-404; these read KLEKNTTDSKS and KSQE…TDEA. The residue at position 365 (Ser365) is a Phosphoserine.

As to quaternary structure, interacts with CHGA. Interacts with secretogranin II/SCG2. Interacts (via C-terminus) with CPE. Expressed in various brain areas, with highest levels in the arcuate nucleus and the lateral hypothalamic area, as well as the paraventricular nucleus and the ventromedial hypothalamus (at protein level).

Its subcellular location is the cytoplasmic vesicle. The protein localises to the secretory vesicle. It is found in the secretory vesicle membrane. The protein resides in the secreted. Member of the granin protein family that regulates the biogenesis of secretory granules. Acts as a sorting receptor for intragranular proteins including chromogranin A/CHGA. May also play a role in angiogenesis. Promotes endothelial proliferation, migration and tube formation through MEK/ERK signaling pathway. In Mus musculus (Mouse), this protein is Secretogranin-3 (Scg3).